We begin with the raw amino-acid sequence, 598 residues long: MTEGTQVFLLPISTSDSTKEPLSTVTSQAQDSSLSANRPVTEKQQEEAEWESISRLLVTRGFKPLCLVKGANLRDFIVFDKQSSQRMRQAFKTLMEETTRQQSMLQELIETNHQLKSELQLEQNRAAHQEQRANDLQQIMDSVKSKIGELEDESLNRVCQEQNRIKDLQKEYKTLQMKCQHYKKKQMEQEETIASLQKEIRRFAKEEEDRVITQKRLFTHLCRRVPHSVLDKQQCGEDDSQSEGKDYLNLGVSPTYKGLLTSLQKQLEKSNSKIDVLLGEKLNLQKDLENRPTEHELRLYKQQVKKLEKTLKKNIKLQDLIGQKKSDDMEKKDEPSKDIHQQALVDQRYFQVLCSIDSIVHSPRAPGVIYKQSKERAQNRSKDAVQECGFEHLVPVIEMWADELTSLKDLYKSLKILSAELIPWHNLKKPNENEGVKVGDLLLMVDTMLEEVENQKETSSMPNSQTLQAIVSHFQKLFDVQSLNGVYPRMNEVYARLGEMNNAVRNLQELLGLDSSSSLCMVVSTVGKLCKMINEDVSEQIKRVLGPEDLQSIINKLEEHEEFFPAFQAFTNDLLEILEIDDLDAIVPAVKKLKVLSY.

The segment covering 16-38 has biased composition (polar residues); it reads DSTKEPLSTVTSQAQDSSLSANR. The tract at residues 16–43 is disordered; sequence DSTKEPLSTVTSQAQDSSLSANRPVTEK. 2 coiled-coil regions span residues 99–210 and 255–317; these read TRQQ…EEDR and TYKG…NIKL. A TPR repeat occupies 484–517; that stretch reads NGVYPRMNEVYARLGEMNNAVRNLQELLGLDSSS.

As to quaternary structure, directly interacts with tubulin-gamma; this interaction determines centrosomal localization.

The protein resides in the cytoplasm. The protein localises to the cytoskeleton. Its subcellular location is the microtubule organizing center. It is found in the centrosome. In terms of biological role, plays a role in the organization of both preexisting and nascent microtubules in interphase cells. During mitosis, required for the organization and orientation of the mitotic spindle. This chain is Centrosomal protein of 70 kDa (Cep70), found in Rattus norvegicus (Rat).